The following is a 343-amino-acid chain: Ricin B-like lectin R40G2 (343 aa).

The Ricin B-type lectin domain occupies 194-340 (TVRVFSAAGE…CEGDNQRWKI (147 aa)).

In terms of biological role, lectin which binds carbohydrates in vitro. Interacts through its lectin domain with glycan structures containing specific motifs. This is Ricin B-like lectin R40G2 from Oryza sativa subsp. japonica (Rice).